Consider the following 249-residue polypeptide: Transcriptional activator protein EsaR (249 aa).

Residues 174-239 enclose the HTH luxR-type domain; it reads QSADKTIFSS…QAIRLGVELD (66 aa). Positions 198-217 form a DNA-binding region, H-T-H motif; that stretch reads YAEIAAITGISVSTVKFHIK.

Belongs to the autoinducer-regulated transcriptional regulatory protein family.

Functions as a potential OhlL-responsive transcriptional regulator. The sequence is that of Transcriptional activator protein EsaR (esaR) from Pantoea stewartii subsp. stewartii (Erwinia stewartii).